The chain runs to 291 residues: 5-hydroxytryptamine receptor 1D (291 aa).

Residues 30–54 form a helical membrane-spanning segment; it reads LCDIWLSSDITCCTASILHLCVIAL. Cysteine 31 and cysteine 108 are joined by a disulfide. Residues aspartate 38 and cysteine 42 each contribute to the serotonin site. The DRY motif; important for ligand-induced conformation changes signature appears at 55–57; that stretch reads DRY. Residues 75 to 96 form a helical membrane-spanning segment; that stretch reads AAAMIAIVWAISICISIPPLFW. Asparagine 111 carries an N-linked (GlcNAc...) asparagine glycan. The next 3 membrane-spanning stretches (helical) occupy residues 115–138, 221–246, and 256–279; these read ISYT…ILYG, KTLG…VLPI, and ALFD…YTVF. Residue serine 241 participates in serotonin binding. The NPxxY motif; important for ligand-induced conformation changes and signaling motif lies at 272–276; it reads NPIIY.

It belongs to the G-protein coupled receptor 1 family. As to quaternary structure, homodimer. Heterodimer with HTR1B.

The protein resides in the cell membrane. G-protein coupled receptor for 5-hydroxytryptamine (serotonin). Also functions as a receptor for ergot alkaloid derivatives, various anxiolytic and antidepressant drugs and other psychoactive substances. Ligand binding causes a conformation change that triggers signaling via guanine nucleotide-binding proteins (G proteins) and modulates the activity of downstream effectors, such as adenylate cyclase. HTR1D is coupled to G(i)/G(o) G alpha proteins and mediates inhibitory neurotransmission by inhibiting adenylate cyclase activity. Regulates the release of 5-hydroxytryptamine in the brain, and thereby affects neural activity. May also play a role in regulating the release of other neurotransmitters. May play a role in vasoconstriction. This Sus scrofa (Pig) protein is 5-hydroxytryptamine receptor 1D (HTR1D).